The primary structure comprises 334 residues: Phospho-N-acetylmuramoyl-pentapeptide-transferase (334 aa).

The next 10 helical transmembrane spans lie at Gly-11–Met-31, Pro-55–Pro-75, Leu-84–Ile-104, Val-124–Val-144, Pro-158–Ala-178, Leu-184–Leu-204, Gly-205–His-225, Ile-233–Leu-253, Phe-258–Val-278, and Leu-311–Leu-331.

This sequence belongs to the glycosyltransferase 4 family. MraY subfamily. It depends on Mg(2+) as a cofactor.

The protein localises to the cell membrane. The catalysed reaction is UDP-N-acetyl-alpha-D-muramoyl-L-alanyl-gamma-D-glutamyl-meso-2,6-diaminopimeloyl-D-alanyl-D-alanine + di-trans,octa-cis-undecaprenyl phosphate = di-trans,octa-cis-undecaprenyl diphospho-N-acetyl-alpha-D-muramoyl-L-alanyl-D-glutamyl-meso-2,6-diaminopimeloyl-D-alanyl-D-alanine + UMP. Its pathway is cell wall biogenesis; peptidoglycan biosynthesis. Functionally, catalyzes the initial step of the lipid cycle reactions in the biosynthesis of the cell wall peptidoglycan: transfers peptidoglycan precursor phospho-MurNAc-pentapeptide from UDP-MurNAc-pentapeptide onto the lipid carrier undecaprenyl phosphate, yielding undecaprenyl-pyrophosphoryl-MurNAc-pentapeptide, known as lipid I. In Symbiobacterium thermophilum (strain DSM 24528 / JCM 14929 / IAM 14863 / T), this protein is Phospho-N-acetylmuramoyl-pentapeptide-transferase.